The following is a 276-amino-acid chain: Nickel import system permease protein NikC (276 aa).

5 helical membrane-spanning segments follow: residues 10-30 (LIFF…FFVS), 73-93 (LFVT…LGLF), 108-128 (FIDV…ASFF), 186-206 (IIPA…LYIS), and 238-258 (IMLI…NLTG). Residues 69 to 258 (ARSTLFVTVL…ITILIFNLTG (190 aa)) enclose the ABC transmembrane type-1 domain.

It belongs to the binding-protein-dependent transport system permease family. OppBC subfamily. In terms of assembly, the complex is composed of two ATP-binding proteins (NikD and NikE), two transmembrane proteins (NikB and NikC) and a solute-binding protein (NikA).

It localises to the cell membrane. In terms of biological role, part of the ABC transporter complex NikABCDE (Opp2) involved in nickel import. Probably responsible for the translocation of the substrate across the membrane. The protein is Nickel import system permease protein NikC of Staphylococcus aureus (strain bovine RF122 / ET3-1).